The following is a 251-amino-acid chain: 1-(5-phosphoribosyl)-5-[(5-phosphoribosylamino)methylideneamino] imidazole-4-carboxamide isomerase (251 aa).

Residue D8 is the Proton acceptor of the active site. The active-site Proton donor is D131.

The protein belongs to the HisA/HisF family.

The protein localises to the cytoplasm. The enzyme catalyses 1-(5-phospho-beta-D-ribosyl)-5-[(5-phospho-beta-D-ribosylamino)methylideneamino]imidazole-4-carboxamide = 5-[(5-phospho-1-deoxy-D-ribulos-1-ylimino)methylamino]-1-(5-phospho-beta-D-ribosyl)imidazole-4-carboxamide. It participates in amino-acid biosynthesis; L-histidine biosynthesis; L-histidine from 5-phospho-alpha-D-ribose 1-diphosphate: step 4/9. The polypeptide is 1-(5-phosphoribosyl)-5-[(5-phosphoribosylamino)methylideneamino] imidazole-4-carboxamide isomerase (Burkholderia thailandensis (strain ATCC 700388 / DSM 13276 / CCUG 48851 / CIP 106301 / E264)).